The following is a 389-amino-acid chain: Pyruvate dehydrogenase E1 component subunit alpha, somatic form, mitochondrial (389 aa).

The N-terminal 28 residues, 1–28 (GKMLAAVSRVLSGVAQKPASRVLVASRT), are a transit peptide targeting the mitochondrion. K62 carries the N6-acetyllysine; alternate modification. At K62 the chain carries N6-succinyllysine; alternate. Residues H91, Y117, R118, A156, G164, V166, D195, G196, A197, N224, and Y226 each contribute to the pyruvate site. Thiamine diphosphate-binding residues include Y117 and R118. Thiamine diphosphate contacts are provided by G164, V166, D195, G196, A197, and N224. D195 is a binding site for Mg(2+). Mg(2+) is bound by residues N224 and Y226. A Phosphoserine; by PDK1 modification is found at S231. N6-acetyllysine; alternate is present on K243. K243 carries the post-translational modification N6-succinyllysine; alternate. N6-succinyllysine is present on K276. H291 lines the thiamine diphosphate pocket. Position 292 is a phosphoserine; by PDK1, PDK2, PDK3 and PDK4 (S292). S294 is subject to Phosphoserine. S299 carries the post-translational modification Phosphoserine; by PDK1, PDK2, PDK3 and PDK4. Y300 is modified (phosphotyrosine). Residue K312 is modified to N6-acetyllysine; alternate. K312 carries the post-translational modification N6-succinyllysine; alternate. 2 positions are modified to N6-acetyllysine: K320 and K335. K384 carries the N6-succinyllysine modification.

Heterotetramer of two PDHA1 and two PDHB subunits. The heterotetramer interacts with DLAT, and is part of the multimeric pyruvate dehydrogenase complex that contains multiple copies of pyruvate dehydrogenase (E1), dihydrolipoamide acetyltransferase (DLAT, E2) and lipoamide dehydrogenase (DLD, E3). These subunits are bound to an inner core composed of about 48 DLAT and 12 PDHX molecules. The cofactor is thiamine diphosphate. Requires Mg(2+) as cofactor. In terms of processing, phosphorylation at Ser-231, Ser-292 and Ser-299 by PDK family kinases inactivates the enzyme; for this phosphorylation at a single site is sufficient. Phosphorylation at Ser-292 interferes with access to active site, and thereby inactivates the enzyme. Dephosphorylation at all three sites, i.e. at Ser-231, Ser-292 and Ser-299, is required for reactivation. Post-translationally, acetylation alters the phosphorylation pattern. Deacetylated by SIRT3.

The protein resides in the mitochondrion matrix. It catalyses the reaction N(6)-[(R)-lipoyl]-L-lysyl-[protein] + pyruvate + H(+) = N(6)-[(R)-S(8)-acetyldihydrolipoyl]-L-lysyl-[protein] + CO2. Its activity is regulated as follows. Pyruvate dehydrogenase activity is inhibited by phosphorylation of PDHA1; it is reactivated by dephosphorylation. In terms of biological role, the pyruvate dehydrogenase complex catalyzes the overall conversion of pyruvate to acetyl-CoA and CO(2), and thereby links the glycolytic pathway to the tricarboxylic cycle. The protein is Pyruvate dehydrogenase E1 component subunit alpha, somatic form, mitochondrial (PDHA1) of Sus scrofa (Pig).